The chain runs to 355 residues: Chromosomal protein D1 (355 aa).

Met-1 bears the N-acetylmethionine mark. The disordered stretch occupies residues 1–355; it reads MEEVAVKKRG…NYNDSESVAA (355 aa). The segment at residues 7-14 is a DNA-binding region (a.T hook 1); it reads KKRGRPSK. Ser-30 is subject to Phosphoserine. 2 DNA-binding regions (a.T hook) span residues 34-41 and 60-67; these read KKRGRPAK and KIQNDEDP. Positions 64–77 are enriched in acidic residues; it reads DEDPEDEGEEDGDG. Ser-80, Ser-88, and Ser-89 each carry phosphoserine. Residues 94 to 101 constitute a DNA-binding region (a.T hook 4); sequence KGRGRPKS. A phosphoserine mark is found at Ser-107, Ser-109, and Ser-112. Phosphothreonine is present on Thr-115. Ser-118 is subject to Phosphoserine. The span at 119–130 shows a compositional bias: basic residues; that stretch reads AKKRKAGRPKKH. The segment at residues 122 to 129 is a DNA-binding region (a.T hook 5); sequence RKAGRPKK. Ser-133 and Ser-135 each carry phosphoserine; by CK2. Residues 135-147 are compositionally biased toward acidic residues; it reads SENEDDQDEDDDG. 5 positions are modified to phosphoserine: Ser-149, Ser-150, Ser-161, Ser-164, and Ser-170. The segment at residues 155–162 is a DNA-binding region (a.T hook 6); that stretch reads RPVGRPSA. The segment at residues 174–181 is a DNA-binding region (a.T hook 7); it reads RGLGRPKK. Ser-186 bears the Phosphoserine; by CK2 mark. A DNA-binding region (a.T hook 8) is located at residues 196-203; the sequence is KKRGRPPQ. Ser-208 bears the Phosphoserine mark. Positions 219–226 form a DNA-binding region, a.T hook 9; that stretch reads RPRGRPKA. Acidic residues predominate over residues 237–247; sequence NDDDQDDENSG. Phosphoserine occurs at positions 246, 252, and 253. 2 DNA-binding regions (a.T hook) span residues 262 to 269 and 281 to 288; these read KKRGRPSL and KPRSRPAK. A phosphoserine mark is found at Ser-299 and Ser-307. The segment covering 307–318 has biased composition (basic and acidic residues); it reads SKKESNDEDRAV. Phosphoserine; by CK2 is present on Ser-311. Thr-321 is subject to Phosphothreonine. Ser-332 is modified (phosphoserine; by CK2). Over residues 345 to 355 the composition is skewed to polar residues; sequence DNYNDSESVAA.

The protein resides in the nucleus. It is found in the chromosome. In terms of biological role, this satellite DNA-associated protein is a double-stranded DNA binding protein specific for tracts of pure at DNA. It may play a role in organizing the higher-order structure of euchromatin as well as heterochromatin. The polypeptide is Chromosomal protein D1 (D1) (Drosophila melanogaster (Fruit fly)).